A 121-amino-acid polypeptide reads, in one-letter code: uncharacterized protein (121 aa).

Transmembrane regions (helical) follow at residues 12–32 (MIGI…HPGV), 35–55 (VIQP…FGGL), and 67–87 (VFVV…YVGD).

It belongs to the sbp family.

It localises to the cell membrane. This is an uncharacterized protein from Mycobacterium bovis (strain ATCC BAA-935 / AF2122/97).